Consider the following 339-residue polypeptide: Putative adenosine/adenine deaminase (339 aa).

Residues histidine 16, histidine 18, and histidine 200 each contribute to the Zn(2+) site. Substrate is bound at residue histidine 18. Glutamate 203 (proton donor) is an active-site residue. Residue aspartate 281 coordinates Zn(2+). Substrate is bound at residue aspartate 282.

This sequence belongs to the metallo-dependent hydrolases superfamily. Adenosine and AMP deaminases family. Requires Zn(2+) as cofactor.

Functionally, putative nucleoside deaminase. May catalyze the hydrolytic deamination of adenosine or some similar substrate and play a role in purine metabolism. This chain is Putative adenosine/adenine deaminase, found in Streptomyces virginiae (Streptomyces cinnamonensis).